A 455-amino-acid chain; its full sequence is tRNA modification GTPase MnmE (455 aa).

Residues arginine 24, glutamate 81, and lysine 120 each contribute to the (6S)-5-formyl-5,6,7,8-tetrahydrofolate site. The 163-residue stretch at glycine 216–glycine 378 folds into the TrmE-type G domain. Asparagine 226 is a binding site for K(+). Residues asparagine 226–serine 231, threonine 245–threonine 251, aspartate 270–glycine 273, asparagine 335–aspartate 338, and serine 359–arginine 361 each bind GTP. Residue serine 230 participates in Mg(2+) binding. K(+) contacts are provided by threonine 245, isoleucine 247, and threonine 250. Position 251 (threonine 251) interacts with Mg(2+). Lysine 455 is a (6S)-5-formyl-5,6,7,8-tetrahydrofolate binding site.

It belongs to the TRAFAC class TrmE-Era-EngA-EngB-Septin-like GTPase superfamily. TrmE GTPase family. As to quaternary structure, homodimer. Heterotetramer of two MnmE and two MnmG subunits. The cofactor is K(+).

It localises to the cytoplasm. Functionally, exhibits a very high intrinsic GTPase hydrolysis rate. Involved in the addition of a carboxymethylaminomethyl (cmnm) group at the wobble position (U34) of certain tRNAs, forming tRNA-cmnm(5)s(2)U34. This chain is tRNA modification GTPase MnmE, found in Pseudomonas aeruginosa (strain UCBPP-PA14).